The chain runs to 595 residues: Epsin-2 (595 aa).

Arg-8, Lys-11, Arg-25, Asn-30, Arg-63, and His-73 together coordinate a 1,2-diacyl-sn-glycero-3-phospho-(1D-myo-inositol-4,5-bisphosphate). In terms of domain architecture, ENTH spans 12-144 (NIVNNYSEAE…KDEERLKVER (133 aa)). Residues 164–183 (NQITFGRGSSQPNLSTSYSE) are compositionally biased toward polar residues. Disordered stretches follow at residues 164-254 (NQIT…RLRR), 267-289 (SRRD…PGSH), 305-396 (SGPV…KPSS), and 423-469 (TSKK…PESF). Arg-170 bears the Omega-N-methylarginine mark. Ser-173, Ser-192, and Ser-195 each carry phosphoserine. 2 stretches are compositionally biased toward polar residues: residues 197–216 (HGST…PQTS) and 235–245 (EQSSESVQTAR). UIM domains are found at residues 218-237 (EEEL…AEQS) and 255-274 (GDDL…TVKV). Residues 306-337 (GPVTQKTEPWSAGASANQTNPWGGTVAPSNIT) are compositionally biased toward polar residues. A run of 4 repeats spans residues 313-315 (EPW), 325-327 (NPW), 338-340 (DPW), and 352-354 (DPW). Positions 313 to 389 (EPWSAGASAN…SNAGKTTDAW (77 aa)) are 6 X 3 AA repeats of [DE]-P-W. Over residues 358-367 (TTASTQSVPK) the composition is skewed to polar residues. Copy 5 of the repeat occupies 370-372 (DPW). Polar residues predominate over residues 374-384 (ASQQPASNAGK). Repeat 6 spans residues 387-389 (DAW). Phosphoserine is present on Ser-443. Positions 449-460 (SQSLTSASSKPS) are enriched in low complexity. Thr-465 carries the post-translational modification Phosphothreonine. 2 repeat units span residues 494–496 (NPF) and 508–510 (NPF). The interval 494–593 (NPFLAPGAAA…AQSTGTTNPF (100 aa)) is 3 X 3 AA repeats of N-P-F. Ser-526 carries the post-translational modification Phosphoserine. Repeat unit 3 spans residues 591 to 593 (NPF).

This sequence belongs to the epsin family. Binds EPS15, AP-2 and clathrin. Interacts with UBQLN2. Interacts with ITSN1. Post-translationally, ubiquitinated.

The protein localises to the cytoplasm. Plays a role in the formation of clathrin-coated invaginations and endocytosis. This chain is Epsin-2 (Epn2), found in Mus musculus (Mouse).